Reading from the N-terminus, the 130-residue chain is Ribonuclease P protein component (130 aa).

Belongs to the RnpA family. As to quaternary structure, consists of a catalytic RNA component (M1 or rnpB) and a protein subunit.

The enzyme catalyses Endonucleolytic cleavage of RNA, removing 5'-extranucleotides from tRNA precursor.. In terms of biological role, RNaseP catalyzes the removal of the 5'-leader sequence from pre-tRNA to produce the mature 5'-terminus. It can also cleave other RNA substrates such as 4.5S RNA. The protein component plays an auxiliary but essential role in vivo by binding to the 5'-leader sequence and broadening the substrate specificity of the ribozyme. The sequence is that of Ribonuclease P protein component from Azotobacter vinelandii (strain DJ / ATCC BAA-1303).